Consider the following 44-residue polypeptide: MQDIKTYLSTAPVLATLWFSSLAGLLIEINRFFPDALTFPFFSF.

Residues 7 to 27 (YLSTAPVLATLWFSSLAGLLI) form a helical membrane-spanning segment.

It belongs to the PsaJ family.

It is found in the plastid. It localises to the chloroplast thylakoid membrane. May help in the organization of the PsaE and PsaF subunits. The chain is Photosystem I reaction center subunit IX from Welwitschia mirabilis (Tree tumbo).